Consider the following 150-residue polypeptide: U1 small nuclear ribonucleoprotein C (150 aa).

The segment at 4–36 adopts a Matrin-type zinc-finger fold; it reads YYCDYCKSYLTHDTMSVRKSHLQGRNHIKFYCD. Residues 66–132 form a disordered region; it reads SDAKKSNGSS…GLPLPPPAVY (67 aa). Residues 80-92 show a composition bias toward basic and acidic residues; sequence DIDKKENSSDHNK. Positions 103–112 are enriched in acidic residues; it reads NDNDDDDDEM. Over residues 115 to 130 the composition is skewed to pro residues; that stretch reads LPPPPNLSGLPLPPPA.

This sequence belongs to the U1 small nuclear ribonucleoprotein C family. U1 snRNP is composed of the 7 core Sm proteins B/B', D1, D2, D3, E, F and G that assemble in a heptameric protein ring on the Sm site of the small nuclear RNA to form the core snRNP, and at least 3 U1 snRNP-specific proteins U1-70K, U1-A and U1-C. U1-C interacts with U1 snRNA and the 5' splice-site region of the pre-mRNA.

Its subcellular location is the nucleus. Functionally, component of the spliceosomal U1 snRNP, which is essential for recognition of the pre-mRNA 5' splice-site and the subsequent assembly of the spliceosome. U1-C is directly involved in initial 5' splice-site recognition for both constitutive and regulated alternative splicing. The interaction with the 5' splice-site seems to precede base-pairing between the pre-mRNA and the U1 snRNA. Stimulates commitment or early (E) complex formation by stabilizing the base pairing of the 5' end of the U1 snRNA and the 5' splice-site region. This chain is U1 small nuclear ribonucleoprotein C, found in Candida albicans (strain SC5314 / ATCC MYA-2876) (Yeast).